The primary structure comprises 419 residues: MAPK/MAK/MRK overlapping kinase (419 aa).

Residues 4 to 285 (YKAIGKIGEG…AHQALQHPYF (282 aa)) enclose the Protein kinase domain. ATP-binding positions include 10–18 (IGEGTFSEV) and Lys33. Asp128 acts as the Proton acceptor in catalysis. Disordered stretches follow at residues 285-344 (FQEQ…RGPA) and 390-419 (PASKKTDPQKDLKPAPQQCRLPTIVRKGGR). Composition is skewed to basic and acidic residues over residues 322-338 (KEGRKQKQSLKQEEDRP) and 393-402 (KKTDPQKDLK).

It belongs to the protein kinase superfamily. CMGC Ser/Thr protein kinase family. CDC2/CDKX subfamily. Requires Mg(2+) as cofactor. In terms of processing, autophosphorylated. Expressed in heart, brain, lung, kidney, and pancreas, and at very low levels in placenta, liver and skeletal muscle. Detected in retina.

Its subcellular location is the cytoplasm. The protein localises to the cell projection. It localises to the cilium. The protein resides in the nucleus. The enzyme catalyses L-seryl-[protein] + ATP = O-phospho-L-seryl-[protein] + ADP + H(+). The catalysed reaction is L-threonyl-[protein] + ATP = O-phospho-L-threonyl-[protein] + ADP + H(+). Phosphorylation appears to increase the enzymatic activity. Able to phosphorylate several exogenous substrates and to undergo autophosphorylation. Negatively regulates cilium length in a cAMP and mTORC1 signaling-dependent manner. The sequence is that of MAPK/MAK/MRK overlapping kinase (MOK) from Homo sapiens (Human).